We begin with the raw amino-acid sequence, 854 residues long: A-kinase anchor protein 4 (854 aa).

A propeptide spanning residues 1–188 is cleaved from the precursor; sequence MMAYSDTTMM…MTAAKNTNNN (188 aa). Phosphoserine is present on residues serine 96, serine 130, serine 190, serine 213, serine 226, and serine 272. The tract at residues 184–207 is disordered; it reads NTNNNQSPSAPPAKPPSTQRAVIS. Residues 219–232 are PKA-RI and PKA-RII subunit binding domain; it reads FYVNRLSSLVIQMA. Residues 287–323 form a disordered region; the sequence is RGTGEESREGGQKSFLYSELSNKSKSGDKQMSQRESK. A compositionally biased stretch (basic and acidic residues) spans 288–297; sequence GTGEESREGG. Serine 300 is modified (phosphoserine). Tyrosine 303 carries the post-translational modification Phosphotyrosine. Serine 304 and serine 307 each carry phosphoserine. A compositionally biased stretch (basic and acidic residues) spans 311-323; it reads KSGDKQMSQRESK. Residues 336-345 form a PKA-RI-alpha subunit binding domain region; the sequence is YANQVASDMM. Residues serine 342, serine 432, serine 443, serine 445, serine 447, serine 450, serine 464, and serine 492 each carry the phosphoserine modification. A Phosphothreonine modification is found at threonine 506. A phosphoserine mark is found at serine 536, serine 581, serine 627, and serine 703.

This sequence belongs to the AKAP110 family. Interacts with PRKAR1A and PRKAR2A. Interacts with ENO4. Interacts with QRICH2. In terms of processing, phosphorylated by STK33 during sperm flagella assembly. Testis specific; only expressed in round spermatids.

It is found in the cell projection. The protein resides in the cilium. It localises to the flagellum. Functionally, major structural component of sperm fibrous sheath. Plays a role in sperm motility. This Homo sapiens (Human) protein is A-kinase anchor protein 4.